Reading from the N-terminus, the 712-residue chain is Glycine--tRNA ligase beta subunit (712 aa).

This sequence belongs to the class-II aminoacyl-tRNA synthetase family. In terms of assembly, tetramer of two alpha and two beta subunits.

It is found in the cytoplasm. It carries out the reaction tRNA(Gly) + glycine + ATP = glycyl-tRNA(Gly) + AMP + diphosphate. The chain is Glycine--tRNA ligase beta subunit from Dechloromonas aromatica (strain RCB).